Consider the following 244-residue polypeptide: CTD nuclear envelope phosphatase 1 (244 aa).

A helical transmembrane segment spans residues 7–29; sequence LLGLRGFVAFAAKLWSFVLYLLR. Residues 57–224 form the FCP1 homology domain; sequence SQVKRKVLVL…LNLLPMLDAL (168 aa).

Belongs to the dullard family. Interacts with bmpr1a, bmpr1b and bmpr2.

The protein resides in the membrane. Its subcellular location is the cytoplasm. It localises to the perinuclear region. The enzyme catalyses O-phospho-L-seryl-[protein] + H2O = L-seryl-[protein] + phosphate. It carries out the reaction O-phospho-L-threonyl-[protein] + H2O = L-threonyl-[protein] + phosphate. Its function is as follows. Serine/threonine protein phosphatase that may dephosphorylate and activate lipins. Lipins are phosphatidate phosphatases that catalyze the conversion of phosphatidic acid to diacylglycerol and control the metabolism of fatty acids at different levels. May indirectly modulate the lipid composition of nuclear and/or endoplasmic reticulum membranes and be required for proper nuclear membrane morphology and/or dynamics. May also indirectly regulate the production of lipid droplets and triacylglycerol. Induces neuronal differentiation by antagonizing BMP signaling. Acts both by dephosphorylating BMPR1A and by promoting BMPR2 proteasomal degradation. This is CTD nuclear envelope phosphatase 1 (ctdnep1) from Xenopus tropicalis (Western clawed frog).